The primary structure comprises 464 residues: MEDLDALWERYREAVRAGGNPQALYQEMVWPALLALWREKPRVYPFPQAFAVSVHTLGTSPEATALAILGAGAERVYVLHTPESARFLPRLRQDTGKDLYPVEIGKSDVEAIYREVKRLLEKHPEVPVALDLTSGTKAMSAGLAAAGFFFQRFYPKVRVVYVDNEDYDPELRRPRAGTEKLRILPNPHEALAEVDALFAKELYGKGEFGQAAAYFRGMVGRTGNQAYALYALLAEMYRAWRALDFGEALKAGRKLLGQLSQNVWLNHPLNARREALEAQVALLEAVDRFLKARDFALKEGVYGLARTLLHLAQEAKEEAAVLAALYAYRALELLLQERLALLGRRAEAPGLSPEEAEALRKALAELLGVLPEEVRLPAKLGLLDLLAFLRLKGDEALGRLSLAELRGLAGALKGRNSALLVHGFDVPSPKAVEGIARLAQGLLQDLEARTALGPLSPEPVPLGF.

Positions 1–190 are CARF domain; sequence MEDLDALWER…LRILPNPHEA (190 aa). Positions 191 to 464 are HEPN domain; the sequence is LAEVDALFAK…LSPEPVPLGF (274 aa).

It belongs to the CRISPR-associated Csm6 family. Homodimer. The protein forms a twisted, head-to-head dimer; the composite ssRNase active site is formed at the dimer interface. Does not require a metal cofactor. is required as a cofactor.

Its activity is regulated as follows. Non-specific ssRNase activity is allosterically activated about 1000-fold by cyclic tetraadenylate (cA4), which probably binds to its CARF domain. Its function is as follows. CRISPR (clustered regularly interspaced short palindromic repeat) is an adaptive immune system that provides protection against mobile genetic elements (viruses, transposable elements and conjugative plasmids). CRISPR clusters contain spacers, sequences complementary to antecedent mobile elements, and target invading nucleic acids. CRISPR clusters are transcribed and processed into CRISPR RNA (crRNA). The type III-A Csm effector complex binds crRNA and acts as a crRNA-guided RNase, DNase and cyclic oligoadenylate synthase; binding of target RNA cognate to the crRNA is required for all activities. This protein is not part of the Csm effector complex. In terms of biological role, a single-strand-specific endoribonuclease (ssRNase) producing free 5'-OH. Activity is approximately 1000-fold stimulated by cyclic oligoadenylate (cOA); only cyclic tetraadenylate (cA4) stimulates the ssRNase activity while linear oligoadenylates do not activate the RNase. Another study showed stimulation by linear tetraadenylate at very high concentrations, but did not examine stimulation by cA4. The polypeptide is CRISPR system endoribonuclease Csm6 (Thermus thermophilus (strain ATCC 27634 / DSM 579 / HB8)).